Reading from the N-terminus, the 212-residue chain is Cytidylate kinase (212 aa).

ATP is bound at residue 7 to 15; sequence GPAASGKGT.

It belongs to the cytidylate kinase family. Type 1 subfamily.

It localises to the cytoplasm. The enzyme catalyses CMP + ATP = CDP + ADP. The catalysed reaction is dCMP + ATP = dCDP + ADP. The chain is Cytidylate kinase from Bradyrhizobium sp. (strain ORS 278).